The sequence spans 448 residues: Beclin-1 (448 aa).

Met1 is modified (N-acetylmethionine). Phosphoserine is present on residues Ser14 and Ser29. Residues 47–66 (TTAQAKPGETQEEEANSGEE) form a disordered region. Residues Ser88, Ser91, and Ser94 each carry the phosphoserine; by AMPK modification. A BH3 motif is present at residues 106 to 125 (TMENLSRRLKVTGDLFDIMS). Positions 110–157 (LSRRLKVTGDLFDIMSGQTDVDHPLCEECTDTLLDQLDTQLNVTENEC) are interaction with BCL2 and BCL2L1 isoform Bcl-X(L). The residue at position 117 (Thr117) is a Phosphothreonine; by DAPK1. Positions 140–268 (DTLLDQLDTQ…LDKLKKTNVF (129 aa)) form a coiled coil. Positions 243–448 (DELKSVENQV…AWVSSQFYNK (206 aa)) are evolutionary conserved domain (ECD). Residues Lys400 and Lys435 each participate in a glycyl lysine isopeptide (Lys-Gly) (interchain with G-Cter in ubiquitin) cross-link. Residues 423-448 (WTKALKFMLTNLKWGLAWVSSQFYNK) form a required for membrane-association region.

This sequence belongs to the beclin family. A homodimeric form is proposed to exist; this metastable form readily transits to ATG14- or UVRAG-containing complexes with BECN1:UVRAG being more stable than BECN1:ATG14. Component of the PI3K (PI3KC3/PI3K-III/class III phosphatidylinositol 3-kinase) complex whose core is composed of the catalytic subunit PIK3C3, the regulatory subunit PIK3R4 and BECN1, and associates with additional regulatory/auxiliary subunits to form alternative complex forms. Accepted alternative complex forms containing a fourth regulatory subunit in a mutually exclusive manner are PI3K complex I (PI3KC3-C1) containing ATG14, and PI3K complex II (PI3KC3-C2) containing UVRAG. PI3KC3-C1 displays a V-shaped architecture with PIK3R4 serving as a bridge between PIK3C3 and the ATG14:BECN1 subcomplex. Both, PI3KC3-C1 and PI3KC3-C2, can associate with further regulatory subunits, such as RUBCN, SH3GLB1/Bif-1 and AMBRA1. PI3KC3-C1 probably associates with PIK3CB. Forms a complex with PPP2CA and AMBRA1; AMBRA1 and BECN1 components of the complex regulate MYC stability via different pathways. Component of the complex, at least composed of LRPPRC, BECN1 and BCL2; the interactions prevent BECN1 from forming an autophagy-inducing complex with PIK3C3. Interacts with AMBRA1, GOPC, GRID2 and PIK3CB. Interacts with BCL2 and BCL2L1 isoform Bcl-X(L); the interaction inhibits BECN1 function in promoting autophagy by interfering with the formation of the PI3K complex. Interacts with cytosolic HMGB1; inhibits the interaction of BECN1 and BCL2 leading to promotion of autophagy. Interacts with USP10, USP13, VMP1, DAPK1. Interacts with the poly-Gln domain of ATXN3; the interaction causes deubiquitination at Lys-400 and stabilizes BECN1. Interacts with SLAMF1. Interacts with TRIM5; the interaction causes activation of BECN1 by causing its dissociation from its inhibitors BCL2 and TAB2. Interacts with active ULK1 (phosphorylated on 'Ser-317') and MEFV simultaneously. Interacts with TRIM50. Interacts with TRIM16. Interacts with WDR81 and WDR91; negatively regulates the PI3 kinase/PI3K activity associated with endosomal membranes. Interacts with LAPTM4B; competes with EGFR for LAPTM4B binding; regulates EGFR activity. Interacts with ATG14; this interaction is increased in the absence of TMEM39A. Interacts with WASHC1; preventing interaction with AMBRA1 and the DCX(AMBRA1) complex and subsequent ubiquitination. Interacts with TRIM17. Interacts with BCL2L10/BCL-B (via BH1 domain). Interacts with SH3BGRL. Interacts with Irgm1; enhancing BECN1-interacting partners and influencing the composition of the BECN1 complex. Interacts with ARMC3. Interacts with LRPPRC. In terms of assembly, (Microbial infection) Interacts with murine gammaherpesvirus 68 M11; the viral protein binds BECN1 with higher affinity than cellular BCL2. Post-translationally, phosphorylation at Thr-117 by DAPK1 reduces its interaction with BCL2 and BCL2L1 and promotes induction of autophagy. In response to autophagic stimuli, phosphorylated at serine residues by AMPK in an ATG14-dependent manner, and this phosphorylation is critical for maximally efficient autophagy. Polyubiquitinated by NEDD4, both with 'Lys-11'- and 'Lys-63'-linkages. 'Lys-11'-linked polyubiquitination leads to degradation and is enhanced when the stabilizing interaction partner VPS34 is depleted. Deubiquitinated by USP10 and USP13, leading to stabilize the PIK3C3/VPS34-containing complexes. Polyubiquitinated at Lys-400 with 'Lys-48'-linkages. 'Lys-48'-linked poyubiquitination of Lys-400 leads to degradation. Deubiquitinated by ATXN3, leading to stabilization. Ubiquitinated at Lys-435 via 'Lys-63'-linkage by the DCX(AMBRA1) complex, thereby increasing the association between BECN1 and PIK3C3 to promote PIK3C3 activity. 'Lys-48'-linked ubiquitination by RNF216 leads to proteasomal degradation and autophagy inhibition. In terms of processing, proteolytically processed by caspases including CASP8 and CASP3; the C-terminal fragments lack autophagy-inducing capacity and are proposed to induce apoptosis. Thus the cleavage is proposed to be an determinant to switch from autophagy to apoptosis pathways affecting cellular homeostasis including viral infections and survival of tumor cells.

The protein resides in the cytoplasm. It is found in the golgi apparatus. The protein localises to the trans-Golgi network membrane. Its subcellular location is the endosome membrane. It localises to the endoplasmic reticulum membrane. The protein resides in the mitochondrion membrane. It is found in the endosome. The protein localises to the cytoplasmic vesicle. Its subcellular location is the autophagosome. It localises to the mitochondrion. The protein resides in the nucleus. Its function is as follows. Plays a central role in autophagy. Acts as a core subunit of different PI3K complex forms that mediate formation of phosphatidylinositol 3-phosphate and are believed to play a role in multiple membrane trafficking pathways: PI3KC3-C1 is involved in initiation of autophagosomes and PI3KC3-C2 in maturation of autophagosomes and endocytosis. Involved in regulation of degradative endocytic trafficking and required for the abscission step in cytokinesis, probably in the context of PI3KC3-C2. Essential for the formation of PI3KC3-C2 but not PI3KC3-C1 PI3K complex forms. Involved in endocytosis including endosome formation in neuronal cells. May play a role in antiviral host defense. Functionally, beclin-1-C 35 kDa localized to mitochondria can promote apoptosis; it induces the mitochondrial translocation of BAX and the release of proapoptotic factors. The chain is Beclin-1 (Becn1) from Mus musculus (Mouse).